The primary structure comprises 486 residues: Transcription factor VOZ1 (486 aa).

A VOZ region spans residues 208–405 (PPSAFLGPKC…VDGKKTSKGK (198 aa)). C217, C222, C236, and H240 together coordinate Zn(2+). The C3H1-type; atypical zinc-finger motif lies at 217 to 240 (CALWDCPRPAQGFDWFQDYCSSFH). The tract at residues 424–445 (EFPPENNTTNTTNNNKRCIKGR) is disordered. Residues 429–438 (NNTTNTTNNN) show a composition bias toward low complexity.

In terms of assembly, homodimer. Interacts with phytochrome B (phyB). Ubiquitous. Expressed in the vascular bundles of various tissues, specifically in the phloem.

The protein localises to the cytoplasm. It is found in the nucleus. Its function is as follows. Transcriptional activator acting positively in the phytochrome B signaling pathway. Functions redundantly with VOZ2 to promote flowering downstream of phytochrome B (phyB). Down-regulates 'FLOWERING LOCUS C' (FLC) and up-regulates 'FLOWERING LOCUS T' (FT). Binds to the 38-bp cis-acting region of the AVP1 gene. Interacts with phyB in the cytoplasm and is translocated to the nucleus at signal transmission, where it is subjected to degradation in a phytochrome-dependent manner. This chain is Transcription factor VOZ1 (VOZ1), found in Arabidopsis thaliana (Mouse-ear cress).